The following is a 340-amino-acid chain: Glycerol-3-phosphate dehydrogenase [NAD(P)+] (340 aa).

Residues serine 14, phenylalanine 15, arginine 35, and lysine 108 each coordinate NADPH. 2 residues coordinate sn-glycerol 3-phosphate: lysine 108 and glycine 136. Position 140 (alanine 140) interacts with NADPH. The sn-glycerol 3-phosphate site is built by lysine 191, aspartate 244, serine 254, arginine 255, and asparagine 256. Lysine 191 functions as the Proton acceptor in the catalytic mechanism. Arginine 255 is a binding site for NADPH. An NADPH-binding site is contributed by glutamate 281.

Belongs to the NAD-dependent glycerol-3-phosphate dehydrogenase family.

Its subcellular location is the cytoplasm. The enzyme catalyses sn-glycerol 3-phosphate + NAD(+) = dihydroxyacetone phosphate + NADH + H(+). It catalyses the reaction sn-glycerol 3-phosphate + NADP(+) = dihydroxyacetone phosphate + NADPH + H(+). It functions in the pathway membrane lipid metabolism; glycerophospholipid metabolism. Its function is as follows. Catalyzes the reduction of the glycolytic intermediate dihydroxyacetone phosphate (DHAP) to sn-glycerol 3-phosphate (G3P), the key precursor for phospholipid synthesis. This Pseudomonas aeruginosa (strain ATCC 15692 / DSM 22644 / CIP 104116 / JCM 14847 / LMG 12228 / 1C / PRS 101 / PAO1) protein is Glycerol-3-phosphate dehydrogenase [NAD(P)+].